The primary structure comprises 122 residues: Large ribosomal subunit protein uL14 (122 aa).

The protein belongs to the universal ribosomal protein uL14 family. In terms of assembly, part of the 50S ribosomal subunit. Forms a cluster with proteins L3 and L19. In the 70S ribosome, L14 and L19 interact and together make contacts with the 16S rRNA in bridges B5 and B8.

In terms of biological role, binds to 23S rRNA. Forms part of two intersubunit bridges in the 70S ribosome. The sequence is that of Large ribosomal subunit protein uL14 from Ruminiclostridium cellulolyticum (strain ATCC 35319 / DSM 5812 / JCM 6584 / H10) (Clostridium cellulolyticum).